A 420-amino-acid polypeptide reads, in one-letter code: Serine--tRNA ligase (420 aa).

Residue 228–230 participates in L-serine binding; sequence TAE. Position 259 to 261 (259 to 261) interacts with ATP; sequence RSE. Position 282 (Glu-282) interacts with L-serine. An ATP-binding site is contributed by 346–349; sequence EISS. Position 382 (Ser-382) interacts with L-serine.

The protein belongs to the class-II aminoacyl-tRNA synthetase family. Type-1 seryl-tRNA synthetase subfamily. In terms of assembly, homodimer. The tRNA molecule binds across the dimer.

It is found in the cytoplasm. It catalyses the reaction tRNA(Ser) + L-serine + ATP = L-seryl-tRNA(Ser) + AMP + diphosphate + H(+). It carries out the reaction tRNA(Sec) + L-serine + ATP = L-seryl-tRNA(Sec) + AMP + diphosphate + H(+). Its pathway is aminoacyl-tRNA biosynthesis; selenocysteinyl-tRNA(Sec) biosynthesis; L-seryl-tRNA(Sec) from L-serine and tRNA(Sec): step 1/1. In terms of biological role, catalyzes the attachment of serine to tRNA(Ser). Is also able to aminoacylate tRNA(Sec) with serine, to form the misacylated tRNA L-seryl-tRNA(Sec), which will be further converted into selenocysteinyl-tRNA(Sec). In Mycoplasmoides gallisepticum (strain R(low / passage 15 / clone 2)) (Mycoplasma gallisepticum), this protein is Serine--tRNA ligase.